A 310-amino-acid chain; its full sequence is MQPPGEDAPAGCPFSGARAAHSAPAAPAAHEASHVPGDAGWHNAQLDFSKSMSYGDYLSLNSILDAQHPLSPDHNEMLFIIQHQTSELWMKLALFELRGALDAVRTDALPPAFKMLARVSRILEQLVQAWSVLSTMTPSEYSAMRPYLGQSSGFQSYQYRQLEFLLGNKNVQMLQPHAHRPDILEQVRATLEAPSFYDEVVRLLARRGFPIAAERLERDWTQPTRHDETVEAAWLEVYRHPQQHWELYEMAEELVDLEDAFRQWRFRHVTTVERIIGFKQGTGGTSGAPYLRKMLDVVLFPELWHVRTTL.

The segment at 1–36 (MQPPGEDAPAGCPFSGARAAHSAPAAPAAHEASHVP) is disordered. Over residues 15–36 (SGARAAHSAPAAPAAHEASHVP) the composition is skewed to low complexity. Residues 79 to 83 (FIIQH), Tyr-141, and Arg-145 contribute to the substrate site. His-268 contacts heme. Residue Thr-282 coordinates substrate.

The protein belongs to the tryptophan 2,3-dioxygenase family. In terms of assembly, homotetramer. The cofactor is heme.

The catalysed reaction is L-tryptophan + O2 = N-formyl-L-kynurenine. The protein operates within amino-acid degradation; L-tryptophan degradation via kynurenine pathway; L-kynurenine from L-tryptophan: step 1/2. In terms of biological role, heme-dependent dioxygenase that catalyzes the oxidative cleavage of the L-tryptophan (L-Trp) pyrrole ring and converts L-tryptophan to N-formyl-L-kynurenine. Catalyzes the oxidative cleavage of the indole moiety. This Burkholderia lata (strain ATCC 17760 / DSM 23089 / LMG 22485 / NCIMB 9086 / R18194 / 383) protein is Tryptophan 2,3-dioxygenase.